A 375-amino-acid polypeptide reads, in one-letter code: Filamin-binding LIM protein 1 (375 aa).

The segment at 1-69 (MASKPEKRVA…KTWTPSGKTN (69 aa)) is filamin-binding. The tract at residues 40–176 (ARPWEMLPTK…PPPEEPVTLP (137 aa)) is disordered. Over residues 60-83 (KTWTPSGKTNASLSGVTPQLSNGG) the composition is skewed to polar residues. Composition is skewed to pro residues over residues 98–107 (LPPPPPPPSA) and 133–144 (LPPPPPPPPPQA). LIM zinc-binding domains are found at residues 183-244 (DVCG…TLEK), 245-302 (CGKC…RKFA), and 303-372 (PVCS…RSAA). Residues 278 to 375 (ISDESFALDS…HLKRSAAGCC (98 aa)) are FERMT2-binding.

Interacts with FERMT2, FLNA, FLNB and FLNC. Interacts with NKX2-5.

It localises to the cell junction. The protein resides in the focal adhesion. The protein localises to the cytoplasm. Its subcellular location is the cytoskeleton. It is found in the stress fiber. Its function is as follows. Serves as an anchoring site for cell-ECM adhesion proteins and filamin-containing actin filaments. Is implicated in cell shape modulation (spreading) and motility. May participate in the regulation of filamin-mediated cross-linking and stabilization of actin filaments. May also regulate the assembly of filamin-containing signaling complexes that control actin assembly. Promotes dissociation of FLNA from ITGB3 and ITGB7. Promotes activation of integrins and regulates integrin-mediated cell-cell adhesion. This Mus musculus (Mouse) protein is Filamin-binding LIM protein 1 (Fblim1).